We begin with the raw amino-acid sequence, 405 residues long: Multifunctional CCA protein (405 aa).

2 residues coordinate ATP: glycine 8 and arginine 11. CTP-binding residues include glycine 8 and arginine 11. Residues aspartate 21 and aspartate 23 each coordinate Mg(2+). ATP is bound by residues arginine 91, arginine 137, and arginine 140. The CTP site is built by arginine 91, arginine 137, and arginine 140. Positions 228 to 329 constitute an HD domain; sequence TGIHSMMVLE…NDFLDKCDVW (102 aa).

Belongs to the tRNA nucleotidyltransferase/poly(A) polymerase family. Bacterial CCA-adding enzyme type 1 subfamily. Monomer. Can also form homodimers and oligomers. It depends on Mg(2+) as a cofactor. Ni(2+) is required as a cofactor.

The enzyme catalyses a tRNA precursor + 2 CTP + ATP = a tRNA with a 3' CCA end + 3 diphosphate. The catalysed reaction is a tRNA with a 3' CCA end + 2 CTP + ATP = a tRNA with a 3' CCACCA end + 3 diphosphate. Functionally, catalyzes the addition and repair of the essential 3'-terminal CCA sequence in tRNAs without using a nucleic acid template. Adds these three nucleotides in the order of C, C, and A to the tRNA nucleotide-73, using CTP and ATP as substrates and producing inorganic pyrophosphate. tRNA 3'-terminal CCA addition is required both for tRNA processing and repair. Also involved in tRNA surveillance by mediating tandem CCA addition to generate a CCACCA at the 3' terminus of unstable tRNAs. While stable tRNAs receive only 3'-terminal CCA, unstable tRNAs are marked with CCACCA and rapidly degraded. This Pseudoalteromonas atlantica (strain T6c / ATCC BAA-1087) protein is Multifunctional CCA protein.